The sequence spans 328 residues: DNA-directed RNA polymerase subunit alpha (328 aa).

The tract at residues 1–234 (MQNSTTEFLK…DQMSIFADLQ (234 aa)) is alpha N-terminal domain (alpha-NTD). The alpha C-terminal domain (alpha-CTD) stretch occupies residues 248-328 (IDPVLLRPVD…AWPPVGLEKP (81 aa)).

The protein belongs to the RNA polymerase alpha chain family. As to quaternary structure, homodimer. The RNAP catalytic core consists of 2 alpha, 1 beta, 1 beta' and 1 omega subunit. When a sigma factor is associated with the core the holoenzyme is formed, which can initiate transcription.

It catalyses the reaction RNA(n) + a ribonucleoside 5'-triphosphate = RNA(n+1) + diphosphate. DNA-dependent RNA polymerase catalyzes the transcription of DNA into RNA using the four ribonucleoside triphosphates as substrates. This is DNA-directed RNA polymerase subunit alpha from Neisseria meningitidis serogroup A / serotype 4A (strain DSM 15465 / Z2491).